The chain runs to 994 residues: Sarcoplasmic/endoplasmic reticulum calcium ATPase 1 (994 aa).

At 1–48 the chain is on the cytoplasmic side; that stretch reads MEQAHTKTTEECLAYFGVNENTGLSLDQVKKNFDKFGPNELPAEEGKS. Residues 49-69 form a helical membrane-spanning segment; sequence LWELVAEQFEDLLVRILLLAA. The Lumenal portion of the chain corresponds to 70–89; that stretch reads IISFVLAWFEEGEETVTAFV. A helical transmembrane segment spans residues 90 to 110; the sequence is EPFVILLILIANAVVGVWQER. Over 111–253 the chain is Cytoplasmic; it reads NAEDAIEALK…QEKTPLQQKL (143 aa). A helical membrane pass occupies residues 254–273; it reads DEFGEQLSKVISLICVAVWL. Topologically, residues 274 to 295 are lumenal; sequence INIGHFNDPIHGGSWIKGAIYY. Residues 296-313 traverse the membrane as a helical segment; that stretch reads FKIAVALAVAAIPEGLPA. V304, A305, I307, and E309 together coordinate Ca(2+). The Cytoplasmic portion of the chain corresponds to 314–757; that stretch reads VITTCLALGT…EEGRAIYNNM (444 aa). Residue D351 is the 4-aspartylphosphate intermediate of the active site. Mg(2+) contacts are provided by D351 and T353. Positions 353, 442, 489, 515, 560, 625, 626, 627, 678, and 684 each coordinate ATP. D703 provides a ligand contact to Mg(2+). N706 lines the ATP pocket. Residues 758–777 traverse the membrane as a helical segment; sequence KQFIRYLISSNVGEVVCIFL. Ca(2+)-binding residues include N768 and E771. The Lumenal portion of the chain corresponds to 778-787; that stretch reads TAALGLPEAL. The helical transmembrane segment at 788 to 808 threads the bilayer; it reads IPVQLLWVNLVTDGLPATALG. An interaction with PLN region spans residues 788–808; the sequence is IPVQLLWVNLVTDGLPATALG. Residues N796, T799, and D800 each coordinate Ca(2+). Residues 809 to 828 are Cytoplasmic-facing; the sequence is FNPPDLDIMDRPPRSPKEPL. The helical transmembrane segment at 829–851 threads the bilayer; the sequence is ISGWLFFRYMAIGGYVGAATVGA. The Lumenal portion of the chain corresponds to 852–897; it reads AAWWFMYADDGPNVTFYQLSHFMQCTEDNPDFEGHECEIFESPVPM. C876 and C888 are disulfide-bonded. A helical membrane pass occupies residues 898–917; that stretch reads TMALSVLVTIEMCNALNSLS. E908 contacts Ca(2+). The Cytoplasmic portion of the chain corresponds to 918–930; the sequence is ENQSLIRMPPWSN. The chain crosses the membrane as a helical span at residues 931–949; that stretch reads FWLLGSICLSMSLHFLILY. The segment at 932 to 943 is interaction with PLN; it reads WLLGSICLSMSL. The Lumenal segment spans residues 950–964; it reads VEPLPMIFKLTPLNV. Residues 965 to 985 form a helical membrane-spanning segment; sequence EQWFIVLKMSFPVILLDELLK. Residues 986-994 are Cytoplasmic-facing; that stretch reads FVARNYLEG.

The protein belongs to the cation transport ATPase (P-type) (TC 3.A.3) family. Type IIA subfamily. As to quaternary structure, interacts with sarcolipin (SLN). Interacts with phospholamban (PLN). Interacts with myoregulin (MRLN). Interacts with DWORF. Interacts with VMP1. Mg(2+) serves as cofactor.

The protein resides in the endoplasmic reticulum membrane. Its subcellular location is the sarcoplasmic reticulum membrane. It carries out the reaction Ca(2+)(in) + ATP + H2O = Ca(2+)(out) + ADP + phosphate + H(+). With respect to regulation, inhibited by sarcolipin (SLN) and myoregulin (MRLN). Also shown to be inhibited by phospholamban (PLN) in vitro. Enhanced by DWORF; DWORF increases activity by displacing sarcolipin (SLN), phospholamban (PLN) and myoregulin (MRLN). Functionally, key regulator of striated muscle performance by acting as the major Ca(2+) ATPase responsible for the reuptake of cytosolic Ca(2+) into the sarcoplasmic reticulum. Catalyzes the hydrolysis of ATP coupled with the translocation of calcium from the cytosol to the sarcoplasmic reticulum lumen. Contributes to calcium sequestration involved in muscular excitation/contraction. This chain is Sarcoplasmic/endoplasmic reticulum calcium ATPase 1 (ATP2A1), found in Pelophylax lessonae (Pool frog).